A 331-amino-acid chain; its full sequence is 6-phosphogluconolactonase (331 aa).

This sequence belongs to the cycloisomerase 2 family.

It catalyses the reaction 6-phospho-D-glucono-1,5-lactone + H2O = 6-phospho-D-gluconate + H(+). The protein operates within carbohydrate degradation; pentose phosphate pathway; D-ribulose 5-phosphate from D-glucose 6-phosphate (oxidative stage): step 2/3. In terms of biological role, catalyzes the hydrolysis of 6-phosphogluconolactone to 6-phosphogluconate. The polypeptide is 6-phosphogluconolactonase (Sodalis glossinidius (strain morsitans)).